Reading from the N-terminus, the 335-residue chain is Serpentine receptor class alpha-13 (335 aa).

Residues 1-22 (MAIVSSENRTCADEKLLALYQS) are Extracellular-facing. Residues 23–43 (WSYIASIVFNCLVPTISTYFL) form a helical membrane-spanning segment. The Cytoplasmic segment spans residues 44 to 61 (GRAIFQLCNQATIQYSTR). Residues 62-82 (ILLIATILFAACHQVSYFAFK) traverse the membrane as a helical segment. Over 83–107 (IDLLHTMFFKLDQPCFLQRSSYDCR) the chain is Extracellular. A helical transmembrane segment spans residues 108–128 (FISIAQTTGVVGMALTGLAMS). The Cytoplasmic segment spans residues 129–149 (TDRALALTFPADYHKLKSVPR). The chain crosses the membrane as a helical span at residues 150-170 (VVLSVFVFIVSFSTWFLLTMN). The Extracellular portion of the chain corresponds to 171 to 192 (DPLTGYLNHCGFYPSYSVANFQ). Residues 193–213 (LMLDVILYLAIFNLIWDVILF) form a helical membrane-spanning segment. Residues 214-235 (YYARQQILWRRSYQFQKRYEAR) are Cytoplasmic-facing. The chain crosses the membrane as a helical span at residues 236–255 (ISLNCTQAVFVISICQCISN). Topologically, residues 256–278 (GANSGLMRLLMMIGTSITSVTYS) are extracellular. A helical transmembrane segment spans residues 279-299 (SLLSLFYTAPYSCILLPILMM). The Cytoplasmic segment spans residues 300 to 335 (RISEYIREQRTIGILSLRSEKPGLEEHHQRMRAAWS).

The protein belongs to the nematode receptor-like protein sra family.

Its subcellular location is the membrane. Functionally, chemosensory receptor that negatively regulates RAS/MAPK signaling during vulva induction and the negative regulation of olfaction of volitile attractants. Required for the suppression of vulval induction in response to food starvation. Signaling acts through the GPA-5 G-alpha protein subunit. In Caenorhabditis briggsae, this protein is Serpentine receptor class alpha-13.